We begin with the raw amino-acid sequence, 350 residues long: Galactokinase (350 aa).

Residue 14–17 (EHTD) coordinates substrate. ATP is bound by residues serine 46 and 96–102 (GAGLSSS). Positions 102 and 134 each coordinate Mg(2+). Aspartate 146 acts as the Proton acceptor in catalysis. Tyrosine 196 lines the substrate pocket.

It belongs to the GHMP kinase family. GalK subfamily.

The protein resides in the cytoplasm. It carries out the reaction alpha-D-galactose + ATP = alpha-D-galactose 1-phosphate + ADP + H(+). It functions in the pathway carbohydrate metabolism; galactose metabolism. Catalyzes the transfer of the gamma-phosphate of ATP to D-galactose to form alpha-D-galactose-1-phosphate (Gal-1-P). The chain is Galactokinase from Thermotoga petrophila (strain ATCC BAA-488 / DSM 13995 / JCM 10881 / RKU-1).